Reading from the N-terminus, the 93-residue chain is Small ribosomal subunit protein uS19 (93 aa).

It belongs to the universal ribosomal protein uS19 family.

In terms of biological role, protein S19 forms a complex with S13 that binds strongly to the 16S ribosomal RNA. This is Small ribosomal subunit protein uS19 from Pseudarthrobacter chlorophenolicus (strain ATCC 700700 / DSM 12829 / CIP 107037 / JCM 12360 / KCTC 9906 / NCIMB 13794 / A6) (Arthrobacter chlorophenolicus).